A 333-amino-acid chain; its full sequence is SPbeta prophage-derived recombinase-like protein YomM (333 aa).

A Core-binding (CB) domain is found at 30-113; the sequence is EEHRNLVQEF…GVSSLNNYIE (84 aa). In terms of domain architecture, Tyr recombinase spans 142–332; that stretch reads YEKVKVTYDD…DFEEEKNQIF (191 aa). Residues Arg180, Lys211, His281, and His308 contribute to the active site. The active-site O-(3'-phospho-DNA)-tyrosine intermediate is the Tyr319.

It belongs to the 'phage' integrase family.

This is SPbeta prophage-derived recombinase-like protein YomM (yomM) from Bacillus subtilis (strain 168).